The primary structure comprises 370 residues: 4-hydroxy-3-methylbut-2-en-1-yl diphosphate synthase (flavodoxin) (370 aa).

4 residues coordinate [4Fe-4S] cluster: Cys-270, Cys-273, Cys-305, and Glu-312.

It belongs to the IspG family. [4Fe-4S] cluster serves as cofactor.

It catalyses the reaction (2E)-4-hydroxy-3-methylbut-2-enyl diphosphate + oxidized [flavodoxin] + H2O + 2 H(+) = 2-C-methyl-D-erythritol 2,4-cyclic diphosphate + reduced [flavodoxin]. It participates in isoprenoid biosynthesis; isopentenyl diphosphate biosynthesis via DXP pathway; isopentenyl diphosphate from 1-deoxy-D-xylulose 5-phosphate: step 5/6. Converts 2C-methyl-D-erythritol 2,4-cyclodiphosphate (ME-2,4cPP) into 1-hydroxy-2-methyl-2-(E)-butenyl 4-diphosphate. This Hamiltonella defensa subsp. Acyrthosiphon pisum (strain 5AT) protein is 4-hydroxy-3-methylbut-2-en-1-yl diphosphate synthase (flavodoxin).